Consider the following 161-residue polypeptide: Sterile alpha motif domain-containing protein 12 (161 aa).

The disordered stretch occupies residues 44-64 (QKVPDQKGTPKRLQGEAETAK). An SAM domain is found at 77 to 143 (WTQQDVCKWL…LQQVLQLKVR (67 aa)).

This Mus musculus (Mouse) protein is Sterile alpha motif domain-containing protein 12 (Samd12).